The following is a 177-amino-acid chain: Large ribosomal subunit protein uL6 (177 aa).

It belongs to the universal ribosomal protein uL6 family. Part of the 50S ribosomal subunit.

Functionally, this protein binds to the 23S rRNA, and is important in its secondary structure. It is located near the subunit interface in the base of the L7/L12 stalk, and near the tRNA binding site of the peptidyltransferase center. The polypeptide is Large ribosomal subunit protein uL6 (Erwinia tasmaniensis (strain DSM 17950 / CFBP 7177 / CIP 109463 / NCPPB 4357 / Et1/99)).